We begin with the raw amino-acid sequence, 525 residues long: D-3-phosphoglycerate dehydrogenase (525 aa).

Residues 148–149 (RI), aspartate 168, threonine 200, 227–229 (CAR), and aspartate 253 each bind NAD(+). Residue arginine 229 is part of the active site. Glutamate 258 is an active-site residue. Histidine 276 serves as the catalytic Proton donor. Position 276-279 (276-279 (HLGA)) interacts with NAD(+). In terms of domain architecture, ACT spans 452–524 (LVYIQHQDTT…DIVSVKLIDL (73 aa)).

Belongs to the D-isomer specific 2-hydroxyacid dehydrogenase family.

The catalysed reaction is (2R)-3-phosphoglycerate + NAD(+) = 3-phosphooxypyruvate + NADH + H(+). It carries out the reaction (R)-2-hydroxyglutarate + NAD(+) = 2-oxoglutarate + NADH + H(+). It participates in amino-acid biosynthesis; L-serine biosynthesis; L-serine from 3-phospho-D-glycerate: step 1/3. In bacteria displays feedback inhibition by L-serine. Its function is as follows. Catalyzes the reversible oxidation of 3-phospho-D-glycerate to 3-phosphonooxypyruvate, the first step of the phosphorylated L-serine biosynthesis pathway. Also catalyzes the reversible oxidation of 2-hydroxyglutarate to 2-oxoglutarate. In Bacillus subtilis (strain 168), this protein is D-3-phosphoglycerate dehydrogenase (serA).